A 290-amino-acid chain; its full sequence is Nitrogenase iron protein 1 (290 aa).

10 to 17 is an ATP binding site; it reads GKGGIGKS. Cysteine 98 lines the [4Fe-4S] cluster pocket. The residue at position 101 (arginine 101) is an ADP-ribosylarginine; by dinitrogenase reductase ADP-ribosyltransferase. Cysteine 133 contacts [4Fe-4S] cluster.

Belongs to the NifH/BchL/ChlL family. As to quaternary structure, homodimer. It depends on [4Fe-4S] cluster as a cofactor. The reversible ADP-ribosylation of Arg-101 inactivates the nitrogenase reductase and regulates nitrogenase activity.

The enzyme catalyses N2 + 8 reduced [2Fe-2S]-[ferredoxin] + 16 ATP + 16 H2O = H2 + 8 oxidized [2Fe-2S]-[ferredoxin] + 2 NH4(+) + 16 ADP + 16 phosphate + 6 H(+). Its activity is regulated as follows. Nitrogenase holoenzyme is subject to 'conformational protection' by FeSII; under oxidizing conditions FeSII binds to the holoenzyme and reversibly protects it from oxidation. Functionally, the key enzymatic reactions in nitrogen fixation are catalyzed by the nitrogenase complex, which has 2 components: the iron protein (component 2) and a component 1 which is either a molybdenum-iron protein, a vanadium-iron, or an iron-iron protein. The protein is Nitrogenase iron protein 1 (nifH1) of Azotobacter vinelandii.